The chain runs to 1330 residues: Paired amphipathic helix protein Sin3-like 3 (1330 aa).

2 PAH domains span residues 8-78 (QKLT…LPKG) and 94-164 (KRVE…LPDT). The span at 191–246 (IITPHPDHDYGTEHIDQDRERPIKKENKEHMRGTNKENEHRDARDFEPHSKKEQFL) shows a compositional bias: basic and acidic residues. The segment at 191-281 (IITPHPDHDY…VPSSSTYDEK (91 aa)) is disordered. Over residues 262–277 (ISNQSKLSGAVPSSST) the composition is skewed to polar residues. Positions 283-351 (AMKSYSQDLA…DSFIEFLVQC (69 aa)) constitute a PAH 3 domain. Disordered stretches follow at residues 373–401 (GEGKYPQPSLDNDRDQEHKRDDGLRDRDH), 718–775 (NQNV…GRTS), 789–808 (KNVVTSDEKPESKQAVSIER), 882–906 (QEMAGTSKVEREEGELSPNGDFEED), and 920–1002 (SKAN…EAEC). A compositionally biased stretch (basic and acidic residues) spans 383–401 (DNDRDQEHKRDDGLRDRDH). The segment covering 723 to 734 (SGSSSAGESEGS) has biased composition (low complexity). Residues 789–800 (KNVVTSDEKPES) are compositionally biased toward basic and acidic residues. The segment covering 920 to 932 (SKANDSTGNNISG) has biased composition (polar residues). 2 stretches are compositionally biased toward basic and acidic residues: residues 933–949 (DRSREGEPSCLETRAEN) and 956–968 (NAARSSEDSRNEY). Residues 980–989 (GGEDPEDDLD) show a composition bias toward acidic residues. Residue S996 is modified to Phosphoserine.

As to quaternary structure, interacts with ERF7 and the histone deacetylase HDA19.

It is found in the nucleus. Functionally, acts as a transcriptional repressor. Interacts with ERF7 to repress genes in abscisic acid and drought stress responses. The heterodimer represses transcription by tethering SNL3 to DNA. The protein is Paired amphipathic helix protein Sin3-like 3 (SNL3) of Arabidopsis thaliana (Mouse-ear cress).